Reading from the N-terminus, the 207-residue chain is Large ribosomal subunit protein uL4 (207 aa).

The segment at 47 to 77 is disordered; the sequence is GTADTKTRAEVSGGGRKPWRQKGTGRARHGS. Over residues 63–77 the composition is skewed to basic residues; that stretch reads KPWRQKGTGRARHGS.

The protein belongs to the universal ribosomal protein uL4 family. Part of the 50S ribosomal subunit.

In terms of biological role, one of the primary rRNA binding proteins, this protein initially binds near the 5'-end of the 23S rRNA. It is important during the early stages of 50S assembly. It makes multiple contacts with different domains of the 23S rRNA in the assembled 50S subunit and ribosome. Its function is as follows. Forms part of the polypeptide exit tunnel. The sequence is that of Large ribosomal subunit protein uL4 from Symbiobacterium thermophilum (strain DSM 24528 / JCM 14929 / IAM 14863 / T).